An 81-amino-acid polypeptide reads, in one-letter code: Putative snRNP Sm-like protein (81 aa).

Positions arginine 13 to proline 81 constitute a Sm domain.

The protein belongs to the snRNP Sm proteins family.

This chain is Putative snRNP Sm-like protein, found in Methanothermobacter thermautotrophicus (strain ATCC 29096 / DSM 1053 / JCM 10044 / NBRC 100330 / Delta H) (Methanobacterium thermoautotrophicum).